We begin with the raw amino-acid sequence, 944 residues long: Protein translocase subunit SecA (944 aa).

ATP-binding positions include Gln96, 114-118, and Asp554; that span reads GEGKT.

This sequence belongs to the SecA family. In terms of assembly, monomer and homodimer. Part of the essential Sec protein translocation apparatus which comprises SecA, SecYEG and auxiliary proteins SecDF. Other proteins may also be involved.

Its subcellular location is the cell inner membrane. It localises to the cytoplasm. It carries out the reaction ATP + H2O + cellular proteinSide 1 = ADP + phosphate + cellular proteinSide 2.. Functionally, part of the Sec protein translocase complex. Interacts with the SecYEG preprotein conducting channel. Has a central role in coupling the hydrolysis of ATP to the transfer of proteins into and across the cell membrane, serving as an ATP-driven molecular motor driving the stepwise translocation of polypeptide chains across the membrane. The sequence is that of Protein translocase subunit SecA from Hydrogenobaculum sp. (strain Y04AAS1).